We begin with the raw amino-acid sequence, 321 residues long: o-succinylbenzoate synthase (321 aa).

The active-site Proton donor is K134. Mg(2+) is bound by residues D162, E191, and D214. Residue K236 is the Proton acceptor of the active site.

It belongs to the mandelate racemase/muconate lactonizing enzyme family. MenC type 1 subfamily. A divalent metal cation serves as cofactor.

The enzyme catalyses (1R,6R)-6-hydroxy-2-succinyl-cyclohexa-2,4-diene-1-carboxylate = 2-succinylbenzoate + H2O. Its pathway is quinol/quinone metabolism; 1,4-dihydroxy-2-naphthoate biosynthesis; 1,4-dihydroxy-2-naphthoate from chorismate: step 4/7. It participates in quinol/quinone metabolism; menaquinone biosynthesis. In terms of biological role, converts 2-succinyl-6-hydroxy-2,4-cyclohexadiene-1-carboxylate (SHCHC) to 2-succinylbenzoate (OSB). In Enterobacter sp. (strain 638), this protein is o-succinylbenzoate synthase.